The sequence spans 318 residues: Homeobox protein Nkx-2.5 (318 aa).

Positions 137 to 196 (RRKPRVLFSQAQVYELERRFKQQRYLSAPERDQLASVLKLTSTQVKIWFQNRRYKCKRQR) form a DNA-binding region, homeobox.

Belongs to the NK-2 homeobox family. As to quaternary structure, homodimer (via the homeobox); binds DNA as homodimer. Interacts (via the homeobox) with TBX5 (via the T-box); this complex binds DNA. Interacts with HIPK1 and HIPK2, but not HIPK3. Interacts with the C-terminal zinc finger of GATA4 through its homeobox domain. Also interacts with JARID2 which represses its ability to activate transcription of ANF. Interacts with FBLIM1. Interacts with TBX18. Interacts with histone methyltransferase NSD2 (via HMG box). Interacts with NEDD9. Interacts with TBX1. In terms of tissue distribution, predominantly in the adult and embryonic heart, and to a lesser extent in lingual muscle, spleen and stomach.

The protein localises to the nucleus. Transcription factor required for the development of the heart and the spleen. During heart development, acts as a transcriptional activator of NPPA/ANF in cooperation with GATA4. May cooperate with TBX2 to negatively modulate expression of NPPA/ANF in the atrioventricular canal. Binds to the core DNA motif of NPPA promoter. Together with PBX1, required for spleen development through a mechanism that involves CDKN2B repression. Positively regulates transcription of genes such as COL3A1 and MMP2, resulting in increased pulmonary endothelial fibrosis in response to hypoxia. This is Homeobox protein Nkx-2.5 (Nkx2-5) from Mus musculus (Mouse).